We begin with the raw amino-acid sequence, 219 residues long: Pyridoxine/pyridoxamine 5'-phosphate oxidase (219 aa).

Residues M1–L23 form a disordered region. FMN contacts are provided by residues R66–K71, F81–T82, K88, and Q110. Residue K71 participates in substrate binding. Y128, R132, and S136 together coordinate substrate. FMN-binding positions include Q145–S146 and W191. R197–H199 provides a ligand contact to substrate. An FMN-binding site is contributed by R201.

Belongs to the pyridoxamine 5'-phosphate oxidase family. In terms of assembly, homodimer. The cofactor is FMN.

It carries out the reaction pyridoxamine 5'-phosphate + O2 + H2O = pyridoxal 5'-phosphate + H2O2 + NH4(+). The catalysed reaction is pyridoxine 5'-phosphate + O2 = pyridoxal 5'-phosphate + H2O2. The protein operates within cofactor metabolism; pyridoxal 5'-phosphate salvage; pyridoxal 5'-phosphate from pyridoxamine 5'-phosphate: step 1/1. It functions in the pathway cofactor metabolism; pyridoxal 5'-phosphate salvage; pyridoxal 5'-phosphate from pyridoxine 5'-phosphate: step 1/1. Functionally, catalyzes the oxidation of either pyridoxine 5'-phosphate (PNP) or pyridoxamine 5'-phosphate (PMP) into pyridoxal 5'-phosphate (PLP). This Hyphomonas neptunium (strain ATCC 15444) protein is Pyridoxine/pyridoxamine 5'-phosphate oxidase.